The chain runs to 577 residues: MMKIRHKNKKPGKGSKGCKKPARQNGKKVTSRPSSAPQIVHGNDHASREAELKKKRVEEMREKQQVAREQERQRHRTMESYCQDVLKRQQEFEQKEEVLQELNMFPQLDDEATRKAYYKEFRKVVEYSDVILEVLDARDPLGCRCFQMEETVLRAEGNKKLVLVLNKIDLVPKEIVEKWLEYLLNELPTVAFKASTQHHQVKNLTRCKVPVDQASESLLKSRACFGAENLMRVLGNYCRLGEVRGHIRVGVVGLPNVGKSSLINSLKRSRACSVGAVPGVTKFMQEVYLDKFIRLLDAPGIVPGPNSEVGTILRNCIHVQKLADPVTPVETILQRCNLEEISSYYGVSGFQTTEHFLTAVAHRLGKKKKGGVYSQEQAAKAVLADWVSGKISFYTLPPPTHTLPTHLSAEIVKEMTEVFDIEDTEHANEDTMECLAVGESDELLGDMDPQEMEVRWLHSPLVKIADAIENRSTVYKIGNLTGYCTKPNRNQMGWPKRNVDHHCPQNNRVVEVSSVDRRPMLQRILETDPLQQGQALASALKNKKKLQKRSDKIATKLSDSMMSMLDLSGNSDDCAGD.

The segment covering 1 to 30 (MMKIRHKNKKPGKGSKGCKKPARQNGKKVT) has biased composition (basic residues). The tract at residues 1–75 (MMKIRHKNKK…VAREQERQRH (75 aa)) is disordered. The required for nucleolar localization stretch occupies residues 9 to 28 (KKPGKGSKGCKKPARQNGKK). The span at 42-75 (GNDHASREAELKKKRVEEMREKQQVAREQERQRH) shows a compositional bias: basic and acidic residues. Positions 43–103 (NDHASREAEL…QKEEVLQELN (61 aa)) form a coiled coil. Residues 118–304 (YKEFRKVVEY…LLDAPGIVPG (187 aa)) enclose the CP-type G domain. Residues 166–169 (NKID), 253–260 (GLPNVGKS), and 297–300 (DAPG) contribute to the GTP site.

Belongs to the TRAFAC class YlqF/YawG GTPase family. In terms of assembly, interacts with MDM2; this interaction, which occurs in the nucleoplasm, stabilizes MDM2. Indirectly interacts with TP53, via MDM2-binding. Interacts with TERF1; this interaction probably occurs in the nucleoplasm and is increased during mitosis, when the nucleolus is disassembled. This binding may promote TERF1 homodimerization. Interacts with TERT.

Its subcellular location is the nucleus. It is found in the nucleolus. In terms of biological role, stabilizes TERF1 telomeric association by preventing TERF1 recruitment by PML. Stabilizes TERF1 protein by preventing its ubiquitination and hence proteasomal degradation. Does so by interfering with TERF1-binding to FBXO4 E3 ubiquitin-protein ligase. Required for cell proliferation. By stabilizing TRF1 protein during mitosis, promotes metaphase-to-anaphase transition. Stabilizes MDM2 protein by preventing its ubiquitination, and hence proteasomal degradation. By acting on MDM2, may affect TP53 activity. Required for normal processing of ribosomal pre-rRNA. Binds GTP. This is Guanine nucleotide-binding protein-like 3-like protein (Gnl3l) from Mus musculus (Mouse).